The sequence spans 468 residues: Tumor necrosis factor receptor superfamily member 10A (468 aa).

The signal sequence occupies residues 1-23 (MAPPPARVHLGAFLAVTPNPGSA). Residues 17-82 (TPNPGSAASG…APGPRPAREA (66 aa)) form a disordered region. The segment covering 20–34 (PGSAASGTEAAAATP) has biased composition (low complexity). The Extracellular segment spans residues 24–239 (ASGTEAAAAT…VHKESGNGHN (216 aa)). Omega-N-methylarginine is present on Arg-52. The span at 63 to 74 (GPSARARAGRAP) shows a compositional bias: low complexity. TNFR-Cys repeat units lie at residues 107–145 (SAAT…PGAC), 147–188 (RCTE…NTAC), and 189–229 (QCKP…DIEC). Disulfide bonds link Cys-132-Cys-145, Cys-148-Cys-164, Cys-167-Cys-180, Cys-170-Cys-188, Cys-190-Cys-204, Cys-207-Cys-221, and Cys-211-Cys-229. N-linked (GlcNAc...) asparagine glycosylation occurs at Asn-156. The helical transmembrane segment at 240 to 262 (IWVILVVTLVVPLLLVAVLIVCC) threads the bilayer. The Cytoplasmic segment spans residues 263-468 (CIGSGCGGDP…DGTGSAVSLE (206 aa)). Residues 365–448 (MLFFDKFANI…HAREKIQDLL (84 aa)) form the Death domain. 3 positions are modified to phosphoserine: Ser-424, Ser-463, and Ser-466.

As to quaternary structure, monomer. Homooligomers and heterooligomers with TNFRSF10B. Three TNFRSF10A molecules interact with the TNFSF10 homotrimer. Can interact with TRADD and RIPK1. Interacts with ARAP1. In the absence of stimulation, interacts with BIRC2, DDX3X and GSK3B. The interaction with BIRC2 and DDX3X is further enhanced upon receptor stimulation and accompanied by DDX3X and BIRC2 cleavage. Interacts with ZDHHC3. Interacts with PTPN6; this interaction enables the inhibition of T-cell receptor signaling via LCK. (Microbial infection) Interacts with HCMV protein UL141; this interaction prevents TNFRSF10A cell surface expression. Post-translationally, palmitoylated. Palmitoylation of TNFRSF10A is required for its association with lipid rafts, oligomerization and function in TRAIL-induced cell death. Palmitoylated by ZDHHC3. As to expression, widely expressed. High levels are found in spleen, peripheral blood leukocytes, small intestine and thymus, but also in K-562 erythroleukemia cells, MCF-7 breast carcinoma cells and activated T-cells.

The protein localises to the cell membrane. It localises to the membrane raft. Its subcellular location is the cytoplasm. The protein resides in the cytosol. Receptor for the cytotoxic ligand TNFSF10/TRAIL. The adapter molecule FADD recruits caspase-8 to the activated receptor. The resulting death-inducing signaling complex (DISC) performs caspase-8 proteolytic activation which initiates the subsequent cascade of caspases (aspartate-specific cysteine proteases) mediating apoptosis. Promotes the activation of NF-kappa-B. The sequence is that of Tumor necrosis factor receptor superfamily member 10A (TNFRSF10A) from Homo sapiens (Human).